A 368-amino-acid chain; its full sequence is L-arabinitol 4-dehydrogenase (368 aa).

Residues Cys-52, His-77, Glu-78, Cys-107, Cys-110, Cys-113, Cys-121, and Glu-162 each contribute to the Zn(2+) site. NAD(+)-binding residues include Asp-210, Arg-215, and Ile-282.

This sequence belongs to the zinc-containing alcohol dehydrogenase family. As to quaternary structure, homotetramer. Zn(2+) is required as a cofactor.

The catalysed reaction is L-arabinitol + NAD(+) = L-xylulose + NADH + H(+). Plays a key role in liamocins biosynthesis by providing the arabinol moity that is linked to 3,5-dihydroxydecanoic acid (provided by the HR-PKS PKS1) via ester bond formation catalyzed by the esterase EST1. This is L-arabinitol 4-dehydrogenase from Aureobasidium melanogenum (Aureobasidium pullulans var. melanogenum).